A 291-amino-acid chain; its full sequence is Nucleotide-binding protein LJ_0866 (291 aa).

Position 13–20 (13–20 (GMSGAGKT)) interacts with ATP. Position 63–66 (63–66 (DLRV)) interacts with GTP.

Belongs to the RapZ-like family.

Functionally, displays ATPase and GTPase activities. The protein is Nucleotide-binding protein LJ_0866 of Lactobacillus johnsonii (strain CNCM I-12250 / La1 / NCC 533).